Reading from the N-terminus, the 590-residue chain is Leucine-rich repeat transmembrane neuronal protein 4 (590 aa).

The first 30 residues, 1-30 (MGFRLITQLKGMSVLLVLFPTLLLVMLTGA), serve as a signal peptide directing secretion. In terms of domain architecture, LRRNT spans 31-59 (QRACPKNCRCDGKIVYCESHAFADIPENI). The Extracellular segment spans residues 31–424 (QRACPKNCRC…HEYEHVSFHK (394 aa)). An N-linked (GlcNAc...) asparagine glycan is attached at Asn58. LRR repeat units lie at residues 60 to 83 (SGGS…QFAG), 84 to 107 (LNQL…AFQG), 108 to 131 (IRRL…TFHP), 132 to 155 (VPNL…QFKG), 157 to 179 (RKLI…VFQD), 180 to 203 (CRNL…AFAG), 205 to 227 (LKLK…HFPR), 228 to 251 (LFNL…LTWT), 252 to 275 (WSSL…TFKC), and 276 to 299 (LPNL…TVNA). The N-linked (GlcNAc...) asparagine glycan is linked to Asn126. Residue Asn291 is glycosylated (N-linked (GlcNAc...) asparagine). An LRRCT domain is found at 311–362 (NMWECSRSICPLFYWLKNFKGNKESTMICAGPKHIQGEKVSDAVETYNICSD). The chain crosses the membrane as a helical span at residues 425-445 (IIAGSVALFLSVAMILLVIYV). Residues 446–590 (SWKRYPASMK…PAIYLERITN (145 aa)) lie on the Cytoplasmic side of the membrane.

Belongs to the LRRTM family. In terms of assembly, peripherally associated with AMPAR complex. AMPAR complex consists of an inner core made of 4 pore-forming GluA/GRIA proteins (GRIA1, GRIA2, GRIA3 and GRIA4) and 4 major auxiliary subunits arranged in a twofold symmetry. One of the two pairs of distinct binding sites is occupied either by CNIH2, CNIH3 or CACNG2, CACNG3. The other harbors CACNG2, CACNG3, CACNG4, CACNG8 or GSG1L. This inner core of AMPAR complex is complemented by outer core constituents binding directly to the GluA/GRIA proteins at sites distinct from the interaction sites of the inner core constituents. Outer core constituents include at least PRRT1, PRRT2, CKAMP44/SHISA9, FRRS1L and NRN1. The proteins of the inner and outer core serve as a platform for other, more peripherally associated AMPAR constituents, including LRRTM4. Alone or in combination, these auxiliary subunits control the gating and pharmacology of the AMPAR complex and profoundly impact their biogenesis and protein processing. As to expression, expressed in the brain (at protein level).

Its subcellular location is the cell membrane. It localises to the postsynaptic cell membrane. In terms of biological role, may play a role in the development and maintenance of the nervous system. Exhibits strong synaptogenic activity, restricted to excitatory presynaptic differentiation. The protein is Leucine-rich repeat transmembrane neuronal protein 4 (Lrrtm4) of Rattus norvegicus (Rat).